The chain runs to 447 residues: Phosphoglucosamine mutase (447 aa).

The Phosphoserine intermediate role is filled by Ser-102. Ser-102, Asp-241, Asp-243, and Asp-245 together coordinate Mg(2+). Ser-102 carries the post-translational modification Phosphoserine.

Belongs to the phosphohexose mutase family. It depends on Mg(2+) as a cofactor. Post-translationally, activated by phosphorylation.

It carries out the reaction alpha-D-glucosamine 1-phosphate = D-glucosamine 6-phosphate. Functionally, catalyzes the conversion of glucosamine-6-phosphate to glucosamine-1-phosphate. This Hamiltonella defensa subsp. Acyrthosiphon pisum (strain 5AT) protein is Phosphoglucosamine mutase.